The sequence spans 281 residues: 32 kDa heat shock protein (281 aa).

Positions 142-168 (EDDEEIDSDEEFGDSDQDEEDSDDEEI) are enriched in acidic residues. The disordered stretch occupies residues 142-281 (EDDEEIDSDE…NENNKKKQKN (140 aa)). The span at 180–209 (KITEISEVPESKKEKTPEPKKVPEPKKEQV) shows a compositional bias: basic and acidic residues. Low complexity predominate over residues 210–273 (KQPTQPQQKK…NNKRPQNQNE (64 aa)).

The polypeptide is 32 kDa heat shock protein (hspC) (Dictyostelium discoideum (Social amoeba)).